Reading from the N-terminus, the 66-residue chain is DNA-directed RNA polymerase subunit Rpo10 (66 aa).

Zn(2+)-binding residues include C7, C10, C44, and C45.

This sequence belongs to the archaeal Rpo10/eukaryotic RPB10 RNA polymerase subunit family. Part of the RNA polymerase complex. Requires Zn(2+) as cofactor.

The protein localises to the cytoplasm. The catalysed reaction is RNA(n) + a ribonucleoside 5'-triphosphate = RNA(n+1) + diphosphate. Functionally, DNA-dependent RNA polymerase (RNAP) catalyzes the transcription of DNA into RNA using the four ribonucleoside triphosphates as substrates. This chain is DNA-directed RNA polymerase subunit Rpo10, found in Saccharolobus islandicus (strain Y.N.15.51 / Yellowstone #2) (Sulfolobus islandicus).